The following is a 181-amino-acid chain: Iron sulfur cluster assembly protein 1, mitochondrial (181 aa).

Residues 159 to 181 are disordered; the sequence is RKTKNPTLGAEAAETPAAATATA. The span at 168-181 shows a compositional bias: low complexity; that stretch reads AEAAETPAAATATA.

The protein belongs to the NifU family. In terms of assembly, component of the core Fe-S cluster (ISC) assembly machinery. [2Fe-2S] cluster is required as a cofactor.

The protein localises to the mitochondrion matrix. Its pathway is cofactor biosynthesis; iron-sulfur cluster biosynthesis. Scaffold protein for the de novo synthesis of iron-sulfur (Fe-S) clusters within mitochondria, which is required for maturation of both mitochondrial and cytoplasmic [2Fe-2S] and [4Fe-4S] proteins. First, a [2Fe-2S] cluster is transiently assembled on the scaffold protein ISU1. In a second step, the cluster is released from ISU1, transferred to a glutaredoxin, followed by the formation of mitochondrial [2Fe-2S] proteins, the synthesis of [4Fe-4S] clusters and their target-specific insertion into the recipient apoproteins. Cluster assembly on ISU1 depends on the function of the cysteine desulfurase complex NFS1-ISD11, which serves as the sulfur donor for cluster synthesis, the iron-binding protein frataxin as the putative iron donor, and the electron transfer chain comprised of ferredoxin reductase and ferredoxin, which receive their electrons from NADH. The sequence is that of Iron sulfur cluster assembly protein 1, mitochondrial (ISU1) from Yarrowia lipolytica (strain CLIB 122 / E 150) (Yeast).